A 201-amino-acid chain; its full sequence is dTTP/UTP pyrophosphatase (201 aa).

The active-site Proton acceptor is Asp-79.

Belongs to the Maf family. YhdE subfamily. A divalent metal cation is required as a cofactor.

It is found in the cytoplasm. The enzyme catalyses dTTP + H2O = dTMP + diphosphate + H(+). The catalysed reaction is UTP + H2O = UMP + diphosphate + H(+). Its function is as follows. Nucleoside triphosphate pyrophosphatase that hydrolyzes dTTP and UTP. May have a dual role in cell division arrest and in preventing the incorporation of modified nucleotides into cellular nucleic acids. This is dTTP/UTP pyrophosphatase from Hahella chejuensis (strain KCTC 2396).